The primary structure comprises 200 residues: Nucleoplasmin (200 aa).

The residue at position 2 (alanine 2) is an N-acetylalanine. Serine 3 carries the post-translational modification Phosphoserine. Threonine 4 carries the post-translational modification Phosphothreonine. At serine 6 the chain carries Phosphoserine. Threonine 8 is modified (phosphothreonine). Residues 35–39 (EDDEE) form an acidic tract A1 region. Acidic residues predominate over residues 123–148 (DYSWAEEEDEGEAEGEEEEEEEEDQE). Residues 123 to 200 (DYSWAEEEDE…GRGRKPAAKK (78 aa)) are disordered. Positions 128–148 (EEEDEGEAEGEEEEEEEEDQE) are acidic tract A2. Phosphoserine is present on serine 149. Residues 153-170 (AVKRPAATKKAGQAKKKK) show a composition bias toward basic residues. Positions 155–170 (KRPAATKKAGQAKKKK) match the Bipartite nuclear localization signal motif. The acidic tract A3 stretch occupies residues 174-176 (EDE). A phosphoserine mark is found at serine 177, serine 178, and serine 182. The segment covering 185-200 (KKGKGAGRGRKPAAKK) has biased composition (basic residues). Omega-N-methylarginine; by PRMT5; alternate is present on arginine 192. Arginine 192 is subject to Symmetric dimethylarginine; by PRMT5; alternate.

Belongs to the nucleoplasmin family. Homopentamer, when bound to H2A-H2B dimers only. Homodecamer of two stacked pentamers, when bound to H2A-H2B dimers and H3-H4 tetramers simultaneously. Interacts with the heterotetramer formed by wdr77 and prmt5. Post-translationally, activated by phosphorylation of multiple serine/threonine residues, along both core and tail domains. The level of phosphorylation gradually increases during egg maturation, reaching an average of 7-10 phosphates per monomer, so that at the time of fertilization the activity of the protein is maximum. Methylated by prmt5, yielding both monomethylated and symmetrically dimethylated Arg-192.

It is found in the nucleus. In terms of biological role, acts as a chaperone for histones, such as histone H2A-H2B, and thus regulates the assembly of nucleosome cores. Involved in chromatin remodeling, especially during fertilization and early embryonic development. May be involved in sperm chromatin decondensation during fertilization. The polypeptide is Nucleoplasmin (Xenopus laevis (African clawed frog)).